The chain runs to 357 residues: Phosphoribosylformylglycinamidine cyclo-ligase (357 aa).

This sequence belongs to the AIR synthase family.

The protein resides in the cytoplasm. It catalyses the reaction 2-formamido-N(1)-(5-O-phospho-beta-D-ribosyl)acetamidine + ATP = 5-amino-1-(5-phospho-beta-D-ribosyl)imidazole + ADP + phosphate + H(+). It functions in the pathway purine metabolism; IMP biosynthesis via de novo pathway; 5-amino-1-(5-phospho-D-ribosyl)imidazole from N(2)-formyl-N(1)-(5-phospho-D-ribosyl)glycinamide: step 2/2. The polypeptide is Phosphoribosylformylglycinamidine cyclo-ligase (Nitrobacter winogradskyi (strain ATCC 25391 / DSM 10237 / CIP 104748 / NCIMB 11846 / Nb-255)).